Consider the following 368-residue polypeptide: Alanine racemase (368 aa).

The active-site Proton acceptor; specific for D-alanine is the lysine 40. An N6-(pyridoxal phosphate)lysine modification is found at lysine 40. Substrate is bound at residue arginine 134. Tyrosine 263 (proton acceptor; specific for L-alanine) is an active-site residue. Methionine 310 contacts substrate.

Belongs to the alanine racemase family. Requires pyridoxal 5'-phosphate as cofactor.

The enzyme catalyses L-alanine = D-alanine. It participates in amino-acid biosynthesis; D-alanine biosynthesis; D-alanine from L-alanine: step 1/1. Its function is as follows. Catalyzes the interconversion of L-alanine and D-alanine. May also act on other amino acids. This Listeria monocytogenes serotype 4b (strain CLIP80459) protein is Alanine racemase (alr).